The following is a 384-amino-acid chain: Substance-K receptor (384 aa).

The Extracellular portion of the chain corresponds to Met-1–Gln-32. N-linked (GlcNAc...) asparagine glycosylation occurs at Asn-19. A helical transmembrane segment spans residues Leu-33–Trp-56. Residues Ile-57–Asn-69 are Cytoplasmic-facing. Residues Tyr-70 to Asn-90 form a helical membrane-spanning segment. The Extracellular portion of the chain corresponds to Phe-91–Tyr-107. A disulfide bond links Cys-106 and Cys-181. Residues Phe-108–Ala-129 form a helical membrane-spanning segment. The Cytoplasmic segment spans residues Asp-130 to Lys-149. Residues Ala-150–Ser-170 form a helical membrane-spanning segment. The Extracellular segment spans residues Thr-171–Leu-196. A helical membrane pass occupies residues Tyr-197 to Ser-218. The Cytoplasmic portion of the chain corresponds to Val-219–Ala-251. The chain crosses the membrane as a helical span at residues Met-252–Leu-272. At Gly-273–Leu-290 the chain is on the extracellular side. Residues Ala-291–Leu-310 traverse the membrane as a helical segment. The Cytoplasmic segment spans residues Asn-311–Pro-384. A lipid anchor (S-palmitoyl cysteine) is attached at Cys-324. Positions His-365–Pro-384 are disordered.

This sequence belongs to the G-protein coupled receptor 1 family.

It is found in the cell membrane. Its function is as follows. This is a receptor for the tachykinin neuropeptide substance K (neurokinin A). It is associated with G proteins that activate a phosphatidylinositol-calcium second messenger system. The rank order of affinity of this receptor to tachykinins is: substance K &gt; neuromedin-K &gt; substance P. This is Substance-K receptor (Tacr2) from Mus musculus (Mouse).